Here is a 282-residue protein sequence, read N- to C-terminus: Trihydroxynaphthalene reductase PfmaI (282 aa).

The NADP(+) site is built by isoleucine 41, asparagine 114, and arginine 147. Catalysis depends on proton donor residues serine 164 and tyrosine 178. Residues tyrosine 178, lysine 182, isoleucine 211, and threonine 213 each coordinate NADP(+). Lysine 182 acts as the Lowers pKa of active site Tyr in catalysis.

The protein belongs to the short-chain dehydrogenases/reductases (SDR) family.

It participates in pigment biosynthesis; melanin biosynthesis. Trihydroxynaphthalene reductase involved the biosynthesis of dihydroxynaphthalene (DHN)-melanin, a bluish-green pigment forming a dark layer in the conidial wall that protects the conidia from UV radiations. The first step of the pathway is the production of the pentaketide 1,3,6,8-tetrahydroxynaphthalene (1,3,6,8-THN or T4HN) by the polyketide synthase PfmaE though condensation of acetyl-CoA with malonyl-CoA. T4HN is not stable and easily oxidizes into the stable form flaviolin. T4HN is also substrate of the hydroxynaphthalene reductase PfmaG to yield scytalone. The scytalone dehydratase PfmaJ then reduces scytalone to 1,3,8-THN. 1,3,8-THN is then substrate of the hydroxynaphthalene reductase PfmaI to yield vermelone. Vermelone is further converted by the multicopper oxidase PfmaD to 1,8-DHN. Finally the laccase PFICI_06862 transforms 1,8-DHN to DHN-melanin. The roles of the 5-oxoprolinase PfmaA and the proline iminopeptidase PfmaB within the cluster have not been elucidated yet. The polypeptide is Trihydroxynaphthalene reductase PfmaI (Pestalotiopsis fici (strain W106-1 / CGMCC3.15140)).